Here is a 90-residue protein sequence, read N- to C-terminus: ATP synthase subunit e, mitochondrial (90 aa).

Ser2 carries the post-translational modification N-acetylserine. The helical transmembrane segment at 7–23 threads the bilayer; the sequence is VLRWSALGAGVVYGFVH.

F-type ATP synthases have 2 components, the catalytic core F(1) and the membrane-embedded component F(0), linked together by a central stalk and a peripheral stalk. The central stalk, also called rotor shaft, is often seen as part of F(1). The peripheral stalk is seen as part of F(0). F(0) contains the membrane channel next to the rotor. F-type ATP synthases form dimers but each monomer functions independently in ATP generation. The dimer consists of 17 different polypeptides: ATP1 (subunit alpha, 3 molecules per monomer, part of F(1)), ATP2 (subunit beta, 3 copies per monomer, part of F(1)), ATP3 (subunit gamma, part of the central stalk), ATP4 (subunit b, part of the peripheral stalk), ATP5/OSCP (subunit 5/OSCP, part of the peripheral stalk), ATP6 (subunit a, part of the peripheral stalk), ATP7 (subunit d, part of the peripheral stalk), ATP8 (subunit 8, part of the peripheral stalk), OLI1 (subunit c, part of the rotor, 10 molecules per monomer), ATP14 (subunit h, part of the peripheral stalk), ATP15 (subunit epsilon, part of the central stalk), ATP16 (subunit delta, part of the central stalk), ATP17 (subunit f, part of the peripheral stalk), ATP18 (subunit i/j, part of the peripheral stalk), ATP19 (subunit k, dimer-specific, at interface between monomers), ATP20 (subunit g, at interface between monomers), TIM11 (subunit e, at interface between monomers).

It localises to the mitochondrion inner membrane. In terms of biological role, mitochondrial membrane ATP synthase (F(1)F(0) ATP synthase or Complex V) produces ATP from ADP in the presence of a proton gradient across the membrane which is generated by electron transport complexes of the respiratory chain. F-type ATP synthases consist of two structural domains, F(1) - containing the extramembraneous catalytic core, and F(0) - containing the membrane proton channel, linked together by a central stalk and a peripheral stalk. During catalysis, ATP synthesis in the catalytic domain of F(1) is coupled via a rotary mechanism of the central stalk subunits to proton translocation. Part of the complex F(0) domain. Minor subunit located with subunit a/ATP6 in the membrane. Together with subunit g/ATP20, probably contributes to membrane curvature at the site of the ATP synthase dimer, ultimately contributing to formation of cristae. The chain is ATP synthase subunit e, mitochondrial from Yarrowia lipolytica (strain CLIB 122 / E 150) (Yeast).